Consider the following 498-residue polypeptide: ATP synthase subunit beta, chloroplastic (498 aa).

172–179 (GGAGVGKT) provides a ligand contact to ATP.

Belongs to the ATPase alpha/beta chains family. In terms of assembly, F-type ATPases have 2 components, CF(1) - the catalytic core - and CF(0) - the membrane proton channel. CF(1) has five subunits: alpha(3), beta(3), gamma(1), delta(1), epsilon(1). CF(0) has four main subunits: a(1), b(1), b'(1) and c(9-12).

Its subcellular location is the plastid. It is found in the chloroplast thylakoid membrane. It carries out the reaction ATP + H2O + 4 H(+)(in) = ADP + phosphate + 5 H(+)(out). In terms of biological role, produces ATP from ADP in the presence of a proton gradient across the membrane. The catalytic sites are hosted primarily by the beta subunits. This Calamus usitatus (Palm tree) protein is ATP synthase subunit beta, chloroplastic.